The chain runs to 1090 residues: MAENTASHRRKPRSLNDRHYSILQDLSAPPRQPPSSSHGEDEETKKSMIKLAGRRRLCKALPKEDEADGYDDPDLVDFYSPVKGETSLDSAGIGNKFTSWDESKEANTELAGEPNFSIITDFCSPSPQLKQKEEMQGDGGRNEIMGILDDLTSKLGTMSIQKKKDSQSNDFDACGVKSQVDKFDFEDAKSSFSLLSDLSKSSPDVVTTYNAGVNSIKDKQGKSGFAIREEQTSKEFSREWEERISNVGKQNSYSGRHFDDNSEDNRQGYNLDRGKSQCKEVDQSMKTTRHIEVSEKIRTVGRSNAAKLRDLDEDDDDDDCLILSGKKAAEMKINKPARSYNAKRHGYDERSLEDEGSITLTGLNLSYTLPGKIATMLYPHQREGLNWLWSLHTQGKGGILGDDMGLGKTMQICSFLAGLFHSKLIKRALVVAPKTLLPHWMKELATVGLSQMTREYYGTSTKAREYDLHHILQGKGILLTTYDIVRNNTKALQGDDHYTDEDDEDGNKWDYMILDEGHLIKNPNTQRAKSLLEIPSSHRIIISGTPIQNNLKELWALFNFSCPGLLGDKNWFKQNYEHYILRGTDKNATDREQRIGSTVAKNLREHIQPFFLRRLKSEVFGDDGATSKLSKKDEIVVWLRLTACQRQLYEAFLNSEIVLSAFDGSPLAALTILKKICDHPLLLTKRAAEDVLEGMDSTLTQEEAGVAERLAMHIADNVDTDDFQTKNDSISCKLSFIMSLLENLIPEGHRVLIFSQTRKMLNLIQDSLTSNGYSFLRIDGTTKAPDRLKTVEEFQEGHVAPIFLLTSQVGGLGLTLTKADRVIVVDPAWNPSTDNQSVDRAYRIGQTKDVIVYRLMTSATVEEKIYRKQVYKGGLFKTATEHKEQIRYFSQQDLRELFSLPKGGFDVSPTQQQLYEEHYNQIKLDEKLESHVKFLETLGIAGVSHHSLLFSKTAPIQAIQKDEEEQIRRETALLLGRASASISQDTVINGADYAFKPKDVNLDKRINISPVDDKELSESVIKARLNRLTMLLQNKGTVSRLPDGGAKIQKQIAELTRELKDMKAAERINMPQVIDLEEDISRKMQKGLNL.

Disordered stretches follow at residues 1–51 (MAEN…MIKL) and 247–273 (VGKQ…NLDR). Residues 44–51 (TKKSMIKL) carry the Nuclear localization signal motif. Residues 256-273 (RHFDDNSEDNRQGYNLDR) are compositionally biased toward basic and acidic residues. In terms of domain architecture, Helicase ATP-binding spans 389 to 564 (WSLHTQGKGG…WALFNFSCPG (176 aa)). An ATP-binding site is contributed by 402–409 (DDMGLGKT). A DEAH box motif is present at residues 515 to 518 (DEGH). Residues 736–895 (FIMSLLENLI…IRYFSQQDLR (160 aa)) enclose the Helicase C-terminal domain. A coiled-coil region spans residues 1043–1069 (DGGAKIQKQIAELTRELKDMKAAERIN).

The protein belongs to the SNF2/RAD54 helicase family.

The protein localises to the nucleus. DNA helicase that acts as an essential component of the spindle assembly checkpoint. Probable chromatin remodeling factor that regulate homologous recombination (HR) and non-homologous recombination (NHR). This Arabidopsis thaliana (Mouse-ear cress) protein is Protein CHROMATIN REMODELING 24.